We begin with the raw amino-acid sequence, 468 residues long: Chromosomal replication initiator protein DnaA (468 aa).

The segment at 1–84 (MSSSLWLQCM…RFEVGSRPVA (84 aa)) is domain I, interacts with DnaA modulators. The disordered stretch occupies residues 81 to 113 (RPVAAPKPAPTRTPADVAAESSAPAQLQARKPV). Residues 84 to 131 (AAPKPAPTRTPADVAAESSAPAQLQARKPVHKTWDDDAQAIADINHRS) form a domain II region. The domain III, AAA+ region stretch occupies residues 132–348 (NVNPKHKFNN…GALNRVIANA (217 aa)). The ATP site is built by glycine 176, glycine 178, lysine 179, and threonine 180. The tract at residues 349–468 (NFTGRPITID…YSNLIRTLSS (120 aa)) is domain IV, binds dsDNA.

The protein belongs to the DnaA family. In terms of assembly, oligomerizes as a right-handed, spiral filament on DNA at oriC.

The protein localises to the cytoplasm. In terms of biological role, plays an essential role in the initiation and regulation of chromosomal replication. ATP-DnaA binds to the origin of replication (oriC) to initiate formation of the DNA replication initiation complex once per cell cycle. Binds the DnaA box (a 9 base pair repeat at the origin) and separates the double-stranded (ds)DNA. Forms a right-handed helical filament on oriC DNA; dsDNA binds to the exterior of the filament while single-stranded (ss)DNA is stabiized in the filament's interior. The ATP-DnaA-oriC complex binds and stabilizes one strand of the AT-rich DNA unwinding element (DUE), permitting loading of DNA polymerase. After initiation quickly degrades to an ADP-DnaA complex that is not apt for DNA replication. Binds acidic phospholipids. This is Chromosomal replication initiator protein DnaA from Vibrio vulnificus (strain CMCP6).